The following is a 1363-amino-acid chain: Vascular endothelial growth factor receptor 3 (1363 aa).

Residues 1 to 24 form the signal peptide; that stretch reads MQRGAALCLRLWLCLGLLDGLVSG. The Extracellular portion of the chain corresponds to 25–775; the sequence is YSMTPPTLNI…EGSEDKGSME (751 aa). 7 consecutive Ig-like C2-type domains span residues 30-127, 151-213, 219-326, 331-415, 422-552, 555-671, and 678-764; these read PTLN…TAAS, KDAM…WGDQ, PFLV…TEVI, PFIS…ISLE, PQIH…FYVT, PDGF…KYLS, and PRLT…ASVA. Residues N33, N104, N166, N251, N299, and N411 are each glycosylated (N-linked (GlcNAc...) asparagine). 2 disulfide bridges follow: C51/C111 and C158/C206. A disulfide bridge links C252 with C310. 3 cysteine pairs are disulfide-bonded: C445–C534, C466–C486, and C578–C653. N-linked (GlcNAc...) asparagine glycosylation is found at N515, N527, N594, N683, and N690. A disulfide bridge connects residues C699 and C751. N-linked (GlcNAc...) asparagine glycosylation is present at N758. The helical transmembrane segment at 776 to 796 threads the bilayer; it reads IVILVGTGVIAVFFWVLLLLI. Residues 797 to 1363 are Cytoplasmic-facing; it reads FCNMRRPAHA…RVTFFTDNSY (567 aa). 3 positions are modified to phosphotyrosine; by SRC: Y830, Y833, and Y853. A Protein kinase domain is found at 845-1173; that stretch reads LHLGRVLGYG…ELVEILGDLL (329 aa). ATP is bound by residues 851 to 859 and K879; that span reads LGYGAFGKV. D1037 functions as the Proton acceptor in the catalytic mechanism. Residue Y1063 is modified to Phosphotyrosine; by autocatalysis and SRC. A phosphotyrosine; by autocatalysis mark is found at Y1068, Y1230, Y1231, and Y1265. A disordered region spans residues 1291–1331; the sequence is HRQESGFSCKGPGQNVAVTRAHPDSQGRRRRPERGARGGQV. Residues Y1333 and Y1337 each carry the phosphotyrosine; by autocatalysis and SRC modification. Y1363 is subject to Phosphotyrosine; by autocatalysis.

Belongs to the protein kinase superfamily. Tyr protein kinase family. CSF-1/PDGF receptor subfamily. Interacts with VEGFC and VEGFD. Monomer in the absence of bound VEGFC or VEGFD. Homodimer in the presence of bound VEGFC or VEGFD. Can also form a heterodimer with KDR. Interacts with PTPN14; the interaction is enhanced by stimulation with VEGFC. Interacts with CRK, GRB2, PTK2/FAK1, SHC1, PIK3R1 and PTPN11/SHP-2. Identified in a complex with SRC and ITGB1. Post-translationally, autophosphorylated on tyrosine residues upon ligand binding. Autophosphorylation occurs in trans, i.e. one subunit of the dimeric receptor phosphorylates tyrosine residues on the other subunit. Phosphorylation in response to H(2)O(2) is mediated by a process that requires SRC and PRKCD activity. Phosphorylation at Tyr-1068 is required for autophosphorylation at additional tyrosine residues. Phosphorylation at Tyr-1063 and Tyr-1337 is important for interaction with CRK and subsequent activation of MAPK8. Phosphorylation at Tyr-1230, Tyr-1231 and Tyr-1337 is important for interaction with GRB2 and subsequent activation of the AKT1 and MAPK1/ERK2 and/or MAPK3/ERK1 signaling pathways. In response to endothelial cell adhesion onto collagen, can also be phosphorylated in the absence of FLT4 kinase activity by SRC at Tyr-830, Tyr-833, Tyr-853, Tyr-1063, Tyr-1333, and Tyr-1337. In terms of tissue distribution, detected in endothelial cells (at protein level). Widely expressed. Detected in fetal spleen, lung and brain. Detected in adult liver, muscle, thymus, placenta, lung, testis, ovary, prostate, heart, and kidney.

It localises to the cell membrane. The protein resides in the cytoplasm. The protein localises to the nucleus. Its subcellular location is the secreted. It carries out the reaction L-tyrosyl-[protein] + ATP = O-phospho-L-tyrosyl-[protein] + ADP + H(+). Present in an inactive conformation in the absence of bound ligand. Binding of VEGFC or VEGFD leads to dimerization and activation by autophosphorylation on tyrosine residues. Inhibited by MAZ51. Functionally, tyrosine-protein kinase that acts as a cell-surface receptor for VEGFC and VEGFD, and plays an essential role in adult lymphangiogenesis and in the development of the vascular network and the cardiovascular system during embryonic development. Promotes proliferation, survival and migration of endothelial cells, and regulates angiogenic sprouting. Signaling by activated FLT4 leads to enhanced production of VEGFC, and to a lesser degree VEGFA, thereby creating a positive feedback loop that enhances FLT4 signaling. Modulates KDR signaling by forming heterodimers. The secreted isoform 3 may function as a decoy receptor for VEGFC and/or VEGFD and play an important role as a negative regulator of VEGFC-mediated lymphangiogenesis and angiogenesis. Binding of vascular growth factors to isoform 1 or isoform 2 leads to the activation of several signaling cascades; isoform 2 seems to be less efficient in signal transduction, because it has a truncated C-terminus and therefore lacks several phosphorylation sites. Mediates activation of the MAPK1/ERK2, MAPK3/ERK1 signaling pathway, of MAPK8 and the JUN signaling pathway, and of the AKT1 signaling pathway. Phosphorylates SHC1. Mediates phosphorylation of PIK3R1, the regulatory subunit of phosphatidylinositol 3-kinase. Promotes phosphorylation of MAPK8 at 'Thr-183' and 'Tyr-185', and of AKT1 at 'Ser-473'. In Homo sapiens (Human), this protein is Vascular endothelial growth factor receptor 3 (FLT4).